The following is a 344-amino-acid chain: Ferrochelatase (344 aa).

Histidine 191 and glutamate 271 together coordinate Fe cation.

Belongs to the ferrochelatase family.

Its subcellular location is the cytoplasm. It carries out the reaction heme b + 2 H(+) = protoporphyrin IX + Fe(2+). It functions in the pathway porphyrin-containing compound metabolism; protoheme biosynthesis; protoheme from protoporphyrin-IX: step 1/1. Catalyzes the ferrous insertion into protoporphyrin IX. This is Ferrochelatase from Pelagibacter ubique (strain HTCC1062).